Consider the following 130-residue polypeptide: MSMQDPIADMLTRIRNGQAANKVAISMPSSKLKVAIASVLAEEGYVESFKVVEGSKPELEITLKYFQNKPVVESIQRVSRPGLRIYKRKDELPKVMGGLGIAVVSTSKGVMTDRAARQASLGGEIICYVA.

The protein belongs to the universal ribosomal protein uS8 family. As to quaternary structure, part of the 30S ribosomal subunit. Contacts proteins S5 and S12.

Functionally, one of the primary rRNA binding proteins, it binds directly to 16S rRNA central domain where it helps coordinate assembly of the platform of the 30S subunit. This chain is Small ribosomal subunit protein uS8, found in Glaesserella parasuis serovar 5 (strain SH0165) (Haemophilus parasuis).